Here is a 469-residue protein sequence, read N- to C-terminus: Ribulose bisphosphate carboxylase large chain (469 aa).

Substrate is bound by residues Asn-115 and Thr-165. Residue Lys-167 is the Proton acceptor of the active site. Lys-169 serves as a coordination point for substrate. 3 residues coordinate Mg(2+): Lys-193, Asp-195, and Glu-196. Lys-193 is subject to N6-carboxylysine. The Proton acceptor role is filled by His-286. Positions 287, 319, and 371 each coordinate substrate.

Belongs to the RuBisCO large chain family. Type I subfamily. As to quaternary structure, heterohexadecamer of 8 large chains and 8 small chains. It depends on Mg(2+) as a cofactor.

It localises to the plastid. The protein resides in the organellar chromatophore. The catalysed reaction is 2 (2R)-3-phosphoglycerate + 2 H(+) = D-ribulose 1,5-bisphosphate + CO2 + H2O. It carries out the reaction D-ribulose 1,5-bisphosphate + O2 = 2-phosphoglycolate + (2R)-3-phosphoglycerate + 2 H(+). Its function is as follows. RuBisCO catalyzes two reactions: the carboxylation of D-ribulose 1,5-bisphosphate, the primary event in carbon dioxide fixation, as well as the oxidative fragmentation of the pentose substrate. Both reactions occur simultaneously and in competition at the same active site. This is Ribulose bisphosphate carboxylase large chain from Paulinella chromatophora.